The primary structure comprises 94 residues: MNLNMLHDNVLIEALEECNSSSPIQLPDSAKKKPTQGKVVAVGPGVYNHSGNILPMTIKVGDVVFYRQWAGNEIEFHDKKYIVMKESDIIAKEA.

Belongs to the GroES chaperonin family. Heptamer of 7 subunits arranged in a ring. Interacts with the chaperonin GroEL.

It is found in the cytoplasm. Its function is as follows. Together with the chaperonin GroEL, plays an essential role in assisting protein folding. The GroEL-GroES system forms a nano-cage that allows encapsulation of the non-native substrate proteins and provides a physical environment optimized to promote and accelerate protein folding. GroES binds to the apical surface of the GroEL ring, thereby capping the opening of the GroEL channel. The sequence is that of Co-chaperonin GroES from Ehrlichia chaffeensis (strain ATCC CRL-10679 / Arkansas).